The following is a 92-amino-acid chain: Endoribonuclease VapD homolog (92 aa).

This sequence belongs to the VapD ribonuclease family. In terms of assembly, homodimer.

Cleaves ssRNA, mostly between U:A. This Neisseria gonorrhoeae protein is Endoribonuclease VapD homolog.